We begin with the raw amino-acid sequence, 357 residues long: Aspartate carbamoyltransferase catalytic subunit (357 aa).

The span at 1–15 shows a compositional bias: polar residues; sequence MSNSIDSQSLPTVSP. Positions 1-21 are disordered; that stretch reads MSNSIDSQSLPTVSPTDYARF. R97 and T98 together coordinate carbamoyl phosphate. Residue K125 participates in L-aspartate binding. 3 residues coordinate carbamoyl phosphate: R147, H177, and Q180. 2 residues coordinate L-aspartate: R211 and R266. 2 residues coordinate carbamoyl phosphate: G307 and P308.

Belongs to the aspartate/ornithine carbamoyltransferase superfamily. ATCase family. In terms of assembly, heterododecamer (2C3:3R2) of six catalytic PyrB chains organized as two trimers (C3), and six regulatory PyrI chains organized as three dimers (R2).

It catalyses the reaction carbamoyl phosphate + L-aspartate = N-carbamoyl-L-aspartate + phosphate + H(+). Its pathway is pyrimidine metabolism; UMP biosynthesis via de novo pathway; (S)-dihydroorotate from bicarbonate: step 2/3. Its function is as follows. Catalyzes the condensation of carbamoyl phosphate and aspartate to form carbamoyl aspartate and inorganic phosphate, the committed step in the de novo pyrimidine nucleotide biosynthesis pathway. In Psychrobacter cryohalolentis (strain ATCC BAA-1226 / DSM 17306 / VKM B-2378 / K5), this protein is Aspartate carbamoyltransferase catalytic subunit.